We begin with the raw amino-acid sequence, 855 residues long: uncharacterized protein (855 aa).

10 helical membrane-spanning segments follow: residues 24 to 44 (PFQY…IVAI), 256 to 276 (AFTV…IFLI), 318 to 338 (IGTG…IGLV), 361 to 381 (LLKG…PPAI), 404 to 424 (LMPW…LMLW), 430 to 450 (LVVA…IAPP), 487 to 507 (IAIA…ISVG), 725 to 745 (ITIA…LSAL), 780 to 800 (MGGM…WILV), and 821 to 841 (FLRA…YPAW).

This sequence belongs to the ABC-4 integral membrane protein family. In terms of assembly, the complex is probably composed of two ATP-binding proteins (Rv0986) and two transmembrane proteins (Rv0987).

Its subcellular location is the cell membrane. In terms of biological role, probably part of an ABC transporter complex involved in host cell binding either through secretion of an adherence factor or through maintaining the architecture and integrity of the mycobacterial cell envelope. Could be required for host endothelial-cell invasion and/or intracellular survival. This is an uncharacterized protein from Mycobacterium tuberculosis (strain ATCC 25618 / H37Rv).